The sequence spans 227 residues: Ion-translocating oxidoreductase complex subunit E (227 aa).

6 helical membrane-spanning segments follow: residues alanine 18–alanine 38, leucine 39–valine 59, isoleucine 69–alanine 89, glycine 93–glycine 113, leucine 125–leucine 145, and histidine 182–leucine 202.

It belongs to the NqrDE/RnfAE family. As to quaternary structure, the complex is composed of six subunits: RnfA, RnfB, RnfC, RnfD, RnfE and RnfG.

The protein resides in the cell inner membrane. Part of a membrane-bound complex that couples electron transfer with translocation of ions across the membrane. The protein is Ion-translocating oxidoreductase complex subunit E of Aliivibrio fischeri (strain MJ11) (Vibrio fischeri).